A 485-amino-acid polypeptide reads, in one-letter code: MPVPPPPPPPLPPPPPPLGAPPPPPPPGPPISTDAPSLRKSDLKGRSALLADIQQGTRLRKVTQINDRSAPQIESSKGTSKEGGAAGSNARGGSTPPALGDLFAGGFPVLRPAGQRDVAGGKTGQGPGSRAPSPRLPTKAISGPLPAPASPRLGNASDTHSSARPVPPRPSVPAPPPPTTPPPPPPPPPPPPPPPLPPASPIKAPSVSPPVPPTKGNPSAVPAPIPCVPPLPPPPPTPPPLPPASALSEKAVRPQLAPLHLPPIPPPLPLLPPYGYPALHSEPSSPAQDVREPPAPPPPPPPPPPPPPPPLPTYASCSPRAAVAPPPPPLPGSSNSGSETPPPLPPKSPSFQTQKALPTPPGAPGPQIILQKKRRGPGAGGGKLNPPPAPPARSPTTELSSKTQQPGGQLRNGGQHVIDDFESKFTFHSMEDFPPPDEYKPGQKIYPSKVPRSRTPGSWLQAEAAGQSSDDIKTRNSQLSLKALR.

Pro residues predominate over residues methionine 1–proline 30. A disordered region spans residues methionine 1–arginine 485. 3 consecutive short sequence motifs (profilin-binding motif) follow at residues valine 3–proline 8, leucine 11–proline 16, and alanine 20–proline 25. The WH2 domain occupies glycine 45–valine 62. Arginine 46 carries the asymmetric dimethylarginine modification. Positions arginine 58 to lysine 61 match the RLRK motif. The span at threonine 63–glycine 78 shows a compositional bias: polar residues. Serine 150 bears the Phosphoserine mark. 2 stretches are compositionally biased toward pro residues: residues proline 165–serine 200 and valine 207–proline 243. Serine 208 carries the phosphoserine modification. Residues alanine 244–leucine 259 are compositionally biased toward low complexity. Pro residues-rich tracts occupy residues histidine 260–glycine 275 and proline 293–proline 312. At serine 394 the chain carries Phosphoserine. Residues threonine 396–glycine 407 show a composition bias toward polar residues. Residues valine 417 to proline 441 show a composition bias toward basic and acidic residues. The WASP-binding motif motif lies at threonine 426–valine 450. The segment covering arginine 475–arginine 485 has biased composition (polar residues).

It belongs to the verprolin family. In terms of assembly, isoform 1 interacts with WASL (via WH1 domain), and monomeric and filamentous actin. As to expression, detected mainly in brain and at lower levels in heart and lung (at protein level). Also detected in testis but not in kidney, liver or spleen.

Its subcellular location is the cytoplasm. Its function is as follows. May have a role in spermatogenesis. May be a regulator of cytoskeletal organization. This chain is WAS/WASL-interacting protein family member 3 (Wipf3), found in Rattus norvegicus (Rat).